Here is a 258-residue protein sequence, read N- to C-terminus: GTP cyclohydrolase FolE2 (258 aa).

The protein belongs to the GTP cyclohydrolase IV family.

The enzyme catalyses GTP + H2O = 7,8-dihydroneopterin 3'-triphosphate + formate + H(+). Its pathway is cofactor biosynthesis; 7,8-dihydroneopterin triphosphate biosynthesis; 7,8-dihydroneopterin triphosphate from GTP: step 1/1. In terms of biological role, converts GTP to 7,8-dihydroneopterin triphosphate. The polypeptide is GTP cyclohydrolase FolE2 (Lawsonia intracellularis (strain PHE/MN1-00)).